The primary structure comprises 244 residues: Ureidoacrylate amidohydrolase RutB (244 aa).

D38 serves as the catalytic Proton acceptor. K147 is a catalytic residue. Catalysis depends on C180, which acts as the Nucleophile.

This sequence belongs to the isochorismatase family. RutB subfamily.

It carries out the reaction (Z)-3-ureidoacrylate + H2O + H(+) = (Z)-3-aminoacrylate + NH4(+) + CO2. The catalysed reaction is (Z)-3-ureidoacrylate + H2O = (Z)-3-aminoacrylate + carbamate + H(+). It catalyses the reaction (Z)-2-methylureidoacrylate + H2O + H(+) = (Z)-2-methylaminoacrylate + NH4(+) + CO2. Its function is as follows. Hydrolyzes ureidoacrylate to form aminoacrylate and carbamate. The carbamate hydrolyzes spontaneously, thereby releasing one of the nitrogen atoms of the pyrimidine ring as ammonia and one of its carbon atoms as CO2. In Escherichia coli O55:H7 (strain CB9615 / EPEC), this protein is Ureidoacrylate amidohydrolase RutB.